The chain runs to 765 residues: Eukaryotic translation initiation factor 3 subunit B (765 aa).

The sufficient for interaction with HCR1 and TIF32 stretch occupies residues 1–136; the sequence is MKNFLPRTLK…LFVECGSMND (136 aa). Positions 28–261 are sufficient for interaction with PIC8; that stretch reads RNTQLKRSKI…GVTAWGGPNF (234 aa). Phosphoserine is present on Ser61. Position 67 is a phosphotyrosine (Tyr67). The 86-residue stretch at 77–162 folds into the RRM domain; sequence QYIVVNGAPV…HRLFLYTMKD (86 aa). Ser671 bears the Phosphoserine mark.

Belongs to the eIF-3 subunit B family. As to quaternary structure, component of the eukaryotic translation initiation factor 3 (eIF-3) complex.

Its subcellular location is the cytoplasm. Functionally, RNA-binding component of the eukaryotic translation initiation factor 3 (eIF-3) complex, which is involved in protein synthesis of a specialized repertoire of mRNAs and, together with other initiation factors, stimulates binding of mRNA and methionyl-tRNAi to the 40S ribosome. The eIF-3 complex specifically targets and initiates translation of a subset of mRNAs involved in cell proliferation. The sequence is that of Eukaryotic translation initiation factor 3 subunit B from Saccharomyces cerevisiae (strain YJM789) (Baker's yeast).